Here is a 244-residue protein sequence, read N- to C-terminus: Phosphoribosylaminoimidazole-succinocarboxamide synthase (244 aa).

This sequence belongs to the SAICAR synthetase family.

It carries out the reaction 5-amino-1-(5-phospho-D-ribosyl)imidazole-4-carboxylate + L-aspartate + ATP = (2S)-2-[5-amino-1-(5-phospho-beta-D-ribosyl)imidazole-4-carboxamido]succinate + ADP + phosphate + 2 H(+). It functions in the pathway purine metabolism; IMP biosynthesis via de novo pathway; 5-amino-1-(5-phospho-D-ribosyl)imidazole-4-carboxamide from 5-amino-1-(5-phospho-D-ribosyl)imidazole-4-carboxylate: step 1/2. The sequence is that of Phosphoribosylaminoimidazole-succinocarboxamide synthase from Prochlorococcus marinus (strain SARG / CCMP1375 / SS120).